The following is a 126-amino-acid chain: Aspartate 1-decarboxylase (126 aa).

Serine 25 acts as the Schiff-base intermediate with substrate; via pyruvic acid in catalysis. Position 25 is a pyruvic acid (Ser) (serine 25). Position 57 (threonine 57) interacts with substrate. The active-site Proton donor is tyrosine 58. 73–75 is a binding site for substrate; the sequence is GAA.

It belongs to the PanD family. In terms of assembly, heterooctamer of four alpha and four beta subunits. It depends on pyruvate as a cofactor. In terms of processing, is synthesized initially as an inactive proenzyme, which is activated by self-cleavage at a specific serine bond to produce a beta-subunit with a hydroxyl group at its C-terminus and an alpha-subunit with a pyruvoyl group at its N-terminus.

It localises to the cytoplasm. The enzyme catalyses L-aspartate + H(+) = beta-alanine + CO2. The protein operates within cofactor biosynthesis; (R)-pantothenate biosynthesis; beta-alanine from L-aspartate: step 1/1. In terms of biological role, catalyzes the pyruvoyl-dependent decarboxylation of aspartate to produce beta-alanine. This chain is Aspartate 1-decarboxylase, found in Salmonella dublin (strain CT_02021853).